The chain runs to 611 residues: Nuclear cap-binding protein subunit 3 (611 aa).

The disordered stretch occupies residues 1–44 (MAAVRGLRVSVKAGGGAEPEPMEVEEGEVEAAADRASPREVVSG). Acidic residues predominate over residues 20–31 (EPMEVEEGEVEA). The tract at residues 108 to 169 (ETLYVYGVDD…LSSMPTNEKG (62 aa)) is RNA recognition motif (RRM) domain. A WLDD motif; essential for 7-methylguanosine-containing mRNA cap binding motif is present at residues 137-140 (WLDD). Disordered stretches follow at residues 159–230 (NLSS…PDTL), 338–360 (EEPI…DDRV), 373–393 (RERE…EMDY), 423–568 (KTIR…DSVL), and 583–611 (RQKK…DTDS). Residues 168-179 (KGQRKKDGEHSS) are compositionally biased toward basic and acidic residues. 2 stretches are compositionally biased toward acidic residues: residues 196 to 218 (DETE…DETE) and 339 to 358 (EPIE…DEDD). Over residues 423 to 439 (KTIRNSMRSDSVGNSVK) the composition is skewed to polar residues. The span at 446 to 463 (SHAEKPADVRLILEEKRQ) shows a compositional bias: basic and acidic residues. The span at 464 to 475 (STASRQQSSSGK) shows a compositional bias: low complexity. 2 stretches are compositionally biased toward basic and acidic residues: residues 501–511 (SRREPLSDVHS) and 544–556 (PKDK…KSEK). Low complexity predominate over residues 602–611 (ESSSGSDTDS).

The protein belongs to the NCBP3 family. In terms of assembly, component of an alternative cap-binding complex (CBC) composed of NCBP1/CBP80 and NCBP3.

The protein localises to the nucleus. It localises to the cytoplasm. Its function is as follows. Associates with NCBP1/CBP80 to form an alternative cap-binding complex (CBC) which plays a key role in mRNA export. NCBP3 serves as adapter protein linking the capped RNAs (m7GpppG-capped RNA) to NCBP1/CBP80. Unlike the conventional CBC with NCBP2 which binds both small nuclear RNA (snRNA) and messenger (mRNA) and is involved in their export from the nucleus, the alternative CBC with NCBP3 does not bind snRNA and associates only with mRNA thereby playing a role in only mRNA export. The protein is Nuclear cap-binding protein subunit 3 of Xenopus tropicalis (Western clawed frog).